Here is a 170-residue protein sequence, read N- to C-terminus: Tubulin polymerization-promoting protein family member 2 (170 aa).

A compositionally biased stretch (low complexity) spans 105–117; sequence TTGVTKSTTVGGV. A disordered region spans residues 105–170; that stretch reads TTGVTKSTTV…GAGTYDKKNQ (66 aa). Residues 129-149 show a composition bias toward basic and acidic residues; it reads THKERFDESGKGKGIEGREET.

Belongs to the TPPP family. Only expressed in male reproductive organs, including testis. Expressed in elongating spermatids at stages IV-VIII of the seminiferous epithelial cycle in testis and in mature sperm in the epididymis.

It is found in the cytoplasm. The protein localises to the cytosol. Its subcellular location is the cell projection. It localises to the cilium. The protein resides in the flagellum. Probable regulator of microtubule dynamics required for sperm motility. In contrast to other members of the family, has no microtubule bundling activity. This is Tubulin polymerization-promoting protein family member 2 from Mus musculus (Mouse).